The chain runs to 1298 residues: MLILRGAPALSAFRHSKLLEQLKQKVSAVSGLYAEFAHFADVNDVLTGEEQQVLDRLLKYGPSVPVQEPAGRLFLVLPRFGTISPWSSKASDIARNCGLTKIQRIERGIAFYVEGQFSDADAQAIADSLHDRMTQLVLGDHAQAAGLFSHAEPKPLTAVDILGGGRAALEKANVELGLALAEDEIDYLITSFNGLGRNPHDIELMMFAQANSEHCRHKIFNASWDIDGQSQEKSLFGMIKNTYEMHSEGVLSAYKDNASVIVGSVAGRFFPDPDTRQYGAVQEPVHILMKVETHNHPTAIAPFPGAATGSGGEIRDEGATGRGAKPKAGLTGFTVSNLQIPGFVQPWEVPYGKPERIVTALDIMIEGPLGGAAFNNEFGRPALTGYFRTFEQSITTPHGDEVRGYHKPIMLAGGMGNIREDHVQKAEITVGSKLIVLGGPAMLIGLGGGAASSMATGTSSADLDFASVQRENPEMERRCQEVIDRCWQLGDRNPISFIHDVGAGGLSNAFPELVNDGDRGGRFELRNVPNDEPGMAPLEIWSNESQERYVLAVGVADYERFKAICERERCPFAVVGEATAEPQLTVTDSHFGNSPVDMPLEVLLGKAPRMHRSVAREAEIGDDFDPSTLDIEESVQRVLRHPAVASKSFLITIGDRSITGLVARDQMVGPWQVPVADCAVTATSFDVNTGEAMAMGERTPLALLDAPASGRMAIGETLTNIAASRIEKLSDIKLSANWMSAAGHPGEDARLYDTVKAVGMELCPELGITIPVGKDSMSMKTRWSDEGTEKSVTSPLSLIVTGFAPVVDIRKTLTPELRMDKGITDLILIDLGRGQNRMGASILAQTHGKLGRVAPDVDDAEDLKAFFAVIQGLNSDGHILSYHDRSDGGLLVSTLEMAFAGHCGLNLHLDGLADNVSELSAILFNEELGAVIQVRQDATPLVLAQFSAAGLEDCVAVIGQPINNDEVSISFLGEPVFSGQRRLLQRQWAETSYQIQRLRDNAECADQEFDALLEEDNPGLTVKLGFDVNEDIAAPYIKTGVRPQVAVLREQGVNGQVEMAAAFDRAGFNAIDVHMSDILAGRVDLNDFKGMVACGGFSYGDVLGAGEGWAKSALFNSRARDAFQGFFERSDSFTLGVCNGCQMLSNLHELIPGSEFWPHFVRNRSEQFEARVAMVQVQESASIFLQGMAGSRMPIAIAHGEGHAEFRNDDALLEADVSGTVALRFVDNHGKVTESYPANPNGSPRGIGGMTTLDGRVTIMMPHPERVFRAVQNSWRPEDWNEDAAWMRMFRNARAWVN.

The interval 303 to 327 (FPGAATGSGGEIRDEGATGRGAKPK) is disordered. Residues 305–316 (GAATGSGGEIRD), 384–386 (TGY), and alanine 676 contribute to the ATP site. Residues aspartate 677, glutamate 716, asparagine 720, and aspartate 884 each contribute to the Mg(2+) site. Serine 886 contacts ATP. The Glutamine amidotransferase type-1 domain maps to 1045–1298 (VAVLREQGVN…MFRNARAWVN (254 aa)). Cysteine 1138 acts as the Nucleophile in catalysis. Active-site residues include histidine 1263 and glutamate 1265.

This sequence in the N-terminal section; belongs to the FGAMS family. As to quaternary structure, monomer.

It is found in the cytoplasm. The catalysed reaction is N(2)-formyl-N(1)-(5-phospho-beta-D-ribosyl)glycinamide + L-glutamine + ATP + H2O = 2-formamido-N(1)-(5-O-phospho-beta-D-ribosyl)acetamidine + L-glutamate + ADP + phosphate + H(+). It participates in purine metabolism; IMP biosynthesis via de novo pathway; 5-amino-1-(5-phospho-D-ribosyl)imidazole from N(2)-formyl-N(1)-(5-phospho-D-ribosyl)glycinamide: step 1/2. Phosphoribosylformylglycinamidine synthase involved in the purines biosynthetic pathway. Catalyzes the ATP-dependent conversion of formylglycinamide ribonucleotide (FGAR) and glutamine to yield formylglycinamidine ribonucleotide (FGAM) and glutamate. This chain is Phosphoribosylformylglycinamidine synthase, found in Pseudomonas syringae pv. tomato (strain ATCC BAA-871 / DC3000).